The sequence spans 453 residues: UDP-glucose 6-dehydrogenase (453 aa).

Residues 2-19, Val11, Thr121, and Glu158 each bind NAD(+); that span reads RLCV…AACF. Residues 154 to 158, Lys210, Asn214, 255 to 259, and Gly263 contribute to the substrate site; these read EFLKE and FIYAG. Catalysis depends on Cys266, which acts as the Nucleophile. Lys269 contacts NAD(+). Lys327 lines the substrate pocket. Arg334 serves as a coordination point for NAD(+).

This sequence belongs to the UDP-glucose/GDP-mannose dehydrogenase family.

The catalysed reaction is UDP-alpha-D-glucose + 2 NAD(+) + H2O = UDP-alpha-D-glucuronate + 2 NADH + 3 H(+). It participates in nucleotide-sugar biosynthesis; UDP-alpha-D-glucuronate biosynthesis; UDP-alpha-D-glucuronate from UDP-alpha-D-glucose: step 1/1. It functions in the pathway bacterial outer membrane biogenesis; lipopolysaccharide biosynthesis. This Pseudomonas aeruginosa (strain ATCC 15692 / DSM 22644 / CIP 104116 / JCM 14847 / LMG 12228 / 1C / PRS 101 / PAO1) protein is UDP-glucose 6-dehydrogenase (udg).